Here is a 230-residue protein sequence, read N- to C-terminus: Transmembrane ascorbate ferrireductase 2 (230 aa).

The next 2 helical transmembrane spans lie at 5–25 and 50–70; these read VLGG…IAAL and VHPV…MLAY. The Cytochrome b561 domain maps to 14-218; the sequence is VVRVLGFIIA…LGGFVILGVV (205 aa). His-51 contacts heme b. Lys-77 and Lys-81 together coordinate L-ascorbate. A helical transmembrane segment spans residues 82–102; the sequence is LVHLTLQLTAFILSLIGVWAA. His-84 provides a ligand contact to heme b. Positions 105, 106, and 115 each coordinate monodehydro-L-ascorbate radical. His-118 lines the heme b pocket. Residues 120–140 form a helical membrane-spanning segment; the sequence is WLGLACLFLFAFQWAAGFVTY. L-ascorbate contacts are provided by Tyr-140, Arg-150, and Ala-151. A heme b-binding site is contributed by His-157. The helical transmembrane segment at 157–177 threads the bilayer; that stretch reads HVFLGISIYALALVTATTGIL. Monodehydro-L-ascorbate radical contacts are provided by Phe-182 and Asn-186. The helical transmembrane segment at 198 to 218 threads the bilayer; it reads LVNTMGVLILILGGFVILGVV.

In terms of assembly, homodimer. It depends on heme b as a cofactor. In terms of tissue distribution, expressed in roots, seedlings, leaves and flowers. Expressed in the L1 layer of the shoot apex, in the epidermis of leaf primordia and young leaves and in vascular bundles. In the differentiation zone of the root, detected in the pericycle and in the epidermis, but not in the cortex. Strongly expressed in the cortical region of the root tip, in the meristematic tissue and in the epidermal cell layer of lateral roots, but not in the root caps. Highly expressed in unfertilized ovules. In mature embryos, expressed in the epidermis, cotyledon tips and root tips.

It is found in the membrane. It carries out the reaction Fe(3+)(out) + L-ascorbate(in) = monodehydro-L-ascorbate radical(in) + Fe(2+)(out) + H(+). In terms of biological role, two-heme-containing cytochrome. Catalyzes ascorbate-dependent transmembrane ferric-chelate reduction. The polypeptide is Transmembrane ascorbate ferrireductase 2 (CYB561B) (Arabidopsis thaliana (Mouse-ear cress)).